The sequence spans 332 residues: CXADR-like membrane protein (332 aa).

Positions 1 to 19 (MHTLIRSFLGLWYVLGALA) are cleaved as a signal peptide. 2 Ig-like C2-type domains span residues 20–123 (QTEI…SFIT) and 130–220 (PSEL…VDVT). Topologically, residues 20–231 (QTEIKLVADE…QSVSNTGILA (212 aa)) are extracellular. Disulfide bonds link cysteine 35-cysteine 109 and cysteine 151-cysteine 204. N-linked (GlcNAc...) asparagine glycosylation occurs at asparagine 193. A helical membrane pass occupies residues 232–252 (GVACGVVVGVFLIFFTVWLLF). Residues 253 to 332 (HKKEFKKREE…EQRHHCLEKI (80 aa)) are Cytoplasmic-facing. Residues 276 to 332 (PKARLVKPGSSSSDSRSSQSGSSSTRSTTNSASRSQRTHSTQETPHGEQRHHCLEKI) form a disordered region. Low complexity predominate over residues 285–310 (SSSSDSRSSQSGSSSTRSTTNSASRS). The span at 320-332 (PHGEQRHHCLEKI) shows a compositional bias: basic and acidic residues.

The protein resides in the cell junction. It is found in the tight junction. The protein localises to the cell membrane. This Xenopus tropicalis (Western clawed frog) protein is CXADR-like membrane protein (clmp).